We begin with the raw amino-acid sequence, 1110 residues long: Retinal guanylyl cyclase 1 (1110 aa).

A signal peptide spans 1-56 (MTACTFLAGGLRDPGLCGPTRWAPSPPGLPPIPPRPRLRLRPPLLLLLLLPRSVLS). At 57 to 467 (AVFTVGVLGP…PDTICNGGVE (411 aa)) the chain is on the extracellular side. A glycan (N-linked (GlcNAc...) asparagine) is linked at Asn-302. Residues 468–492 (PSVVFIGFLLVVGMGLAGAFLAHYC) traverse the membrane as a helical segment. One can recognise a Protein kinase domain in the interval 493–813 (RHRLLHIQMV…DRTFELFKSI (321 aa)). Over 493–1110 (RHRLLHIQMV…KARPGQFSGK (618 aa)) the chain is Cytoplasmic. The Guanylate cyclase domain occupies 885 to 1015 (TLYFSDIVGF…DTVNTASAME (131 aa)). Residues 1070-1110 (PIPKPPDLQPGASNHGISLHEIPPDRRQKLEKARPGQFSGK) are disordered. A compositionally biased stretch (basic and acidic residues) spans 1091–1103 (IPPDRRQKLEKAR).

This sequence belongs to the adenylyl cyclase class-4/guanylyl cyclase family. In terms of assembly, homodimer; requires homodimerization for guanylyl cyclase activity. Interacts (via C-terminus) with RD3 (via C-terminus); promotes the exit of GUCY2D from the endoplasmic reticulum and its trafficking to the photoreceptor outer segments. Interaction with RD3 negatively regulates GUCY2D guanylate cyclase activity. In terms of tissue distribution, expressed in the retina in rod outer segment.

It localises to the photoreceptor outer segment membrane. The protein localises to the endoplasmic reticulum membrane. It catalyses the reaction GTP = 3',5'-cyclic GMP + diphosphate. Its activity is regulated as follows. Activated by GUCA1A when free calcium ions concentration is low, and inhibited by GUCA1A when free calcium ions concentration is high. Negatively regulated by RD3; inhibits the basal and GUCA1A-stimulated guanylate cyclase activity. In terms of biological role, catalyzes the synthesis of cyclic GMP (cGMP) in rods and cones of photoreceptors. Plays an essential role in phototransduction, by mediating cGMP replenishment. May also participate in the trafficking of membrane-asociated proteins to the photoreceptor outer segment membrane. This is Retinal guanylyl cyclase 1 (GUCY2D) from Bos taurus (Bovine).